Consider the following 237-residue polypeptide: Ribosomal RNA large subunit methyltransferase E (237 aa).

Positions 76, 78, 99, 115, and 139 each coordinate S-adenosyl-L-methionine. K179 serves as the catalytic Proton acceptor.

The protein belongs to the class I-like SAM-binding methyltransferase superfamily. RNA methyltransferase RlmE family.

The protein resides in the cytoplasm. It catalyses the reaction uridine(2552) in 23S rRNA + S-adenosyl-L-methionine = 2'-O-methyluridine(2552) in 23S rRNA + S-adenosyl-L-homocysteine + H(+). Specifically methylates the uridine in position 2552 of 23S rRNA at the 2'-O position of the ribose in the fully assembled 50S ribosomal subunit. This Rhodopseudomonas palustris (strain ATCC BAA-98 / CGA009) protein is Ribosomal RNA large subunit methyltransferase E.